The following is a 230-amino-acid chain: Enolase-phosphatase E1 (230 aa).

This sequence belongs to the HAD-like hydrolase superfamily. MasA/MtnC family. In terms of assembly, monomer. It depends on Mg(2+) as a cofactor.

The catalysed reaction is 5-methylsulfanyl-2,3-dioxopentyl phosphate + H2O = 1,2-dihydroxy-5-(methylsulfanyl)pent-1-en-3-one + phosphate. Its pathway is amino-acid biosynthesis; L-methionine biosynthesis via salvage pathway; L-methionine from S-methyl-5-thio-alpha-D-ribose 1-phosphate: step 3/6. It participates in amino-acid biosynthesis; L-methionine biosynthesis via salvage pathway; L-methionine from S-methyl-5-thio-alpha-D-ribose 1-phosphate: step 4/6. Its function is as follows. Bifunctional enzyme that catalyzes the enolization of 2,3-diketo-5-methylthiopentyl-1-phosphate (DK-MTP-1-P) into the intermediate 2-hydroxy-3-keto-5-methylthiopentenyl-1-phosphate (HK-MTPenyl-1-P), which is then dephosphorylated to form the acireductone 1,2-dihydroxy-3-keto-5-methylthiopentene (DHK-MTPene). In Bradyrhizobium sp. (strain BTAi1 / ATCC BAA-1182), this protein is Enolase-phosphatase E1.